The sequence spans 198 residues: Single-stranded DNA cytosine deaminase (198 aa).

Positions 1 to 30 (MDSLLMKQKKFLYHFKNVRWAKGRHETYLC) match the Bipartite nuclear localization signal motif. The interaction with SUPT6H stretch occupies residues 2–26 (DSLLMKQKKFLYHFKNVRWAKGRHE). The 107-residue stretch at 23-129 (GRHETYLCYV…KAEPEGLRRL (107 aa)) folds into the CMP/dCMP-type deaminase domain. Thr27 is modified (phosphothreonine; by PKA). The residue at position 38 (Ser38) is a Phosphoserine; by PKA. Residues 39 to 42 (ATSC) are important for interaction with CTNNBL1. His56 is a binding site for Zn(2+). Glu58 serves as the catalytic Proton donor. The Zn(2+) site is built by Cys87 and Cys90. The interval 88–116 (YDCARHVAEFLRWNPNLSLRIFTARLYFC) is required for interaction with RNF126. Positions 183–198 (LYEVDDLRDAFRMLGF) match the Nuclear export signal motif.

Belongs to the cytidine and deoxycytidylate deaminase family. As to quaternary structure, interacts with CTNNBL1; the interaction is important for the immunoglobulin switch activity of AICDA. Interacts (via its NLS) with KPNA1. Interacts with PKA/PRKACA and PRKAR1A/PKR1. Interacts with SUPT6H, TRIM28 and NCL. Directly interacts with MCM3AP/GANP; this interaction may favor AICDA recruitment to immunoglobulin variable region genes, hence promoting somatic hypermutations. Zn(2+) serves as cofactor. In terms of processing, ser-38 is the major site whereas Thr-27 is the minor site of phosphorylation. Phosphorylation regulates its class-switch recombination activity. Probably monoubiquitinated on several residues by RNF126. As to expression, expressed in germinal center B-cells (at protein level).

Its subcellular location is the nucleus. The protein resides in the cytoplasm. It catalyses the reaction a 2'-deoxycytidine in single-stranded DNA + H2O + H(+) = a 2'-deoxyuridine in single-stranded DNA + NH4(+). Its function is as follows. Single-stranded DNA-specific cytidine deaminase. Involved in somatic hypermutation (SHM), gene conversion, and class-switch recombination (CSR) in B-lymphocytes by deaminating C to U during transcription of Ig-variable (V) and Ig-switch (S) region DNA. Required for several crucial steps of B-cell terminal differentiation necessary for efficient antibody responses. May also play a role in the epigenetic regulation of gene expression by participating in DNA demethylation. The polypeptide is Single-stranded DNA cytosine deaminase (Aicda) (Mus musculus (Mouse)).